The following is a 158-amino-acid chain: Transcriptional repressor NrdR (158 aa).

The disordered stretch occupies residues 1 to 22; sequence MRCPFCGSDDTQVKDSRPAEDN. A zinc finger spans residues 3–34; that stretch reads CPFCGSDDTQVKDSRPAEDNSAIRRRRICPDC. A compositionally biased stretch (basic and acidic residues) spans 11 to 22; the sequence is TQVKDSRPAEDN. The region spanning 49-139 is the ATP-cone domain; sequence LTVLKKTGRK…VYRDFSHAED (91 aa).

The protein belongs to the NrdR family. Zn(2+) is required as a cofactor.

Its function is as follows. Negatively regulates transcription of bacterial ribonucleotide reductase nrd genes and operons by binding to NrdR-boxes. This chain is Transcriptional repressor NrdR, found in Allorhizobium ampelinum (strain ATCC BAA-846 / DSM 112012 / S4) (Agrobacterium vitis (strain S4)).